The chain runs to 154 residues: SsrA-binding protein (154 aa).

It belongs to the SmpB family.

Its subcellular location is the cytoplasm. Functionally, required for rescue of stalled ribosomes mediated by trans-translation. Binds to transfer-messenger RNA (tmRNA), required for stable association of tmRNA with ribosomes. tmRNA and SmpB together mimic tRNA shape, replacing the anticodon stem-loop with SmpB. tmRNA is encoded by the ssrA gene; the 2 termini fold to resemble tRNA(Ala) and it encodes a 'tag peptide', a short internal open reading frame. During trans-translation Ala-aminoacylated tmRNA acts like a tRNA, entering the A-site of stalled ribosomes, displacing the stalled mRNA. The ribosome then switches to translate the ORF on the tmRNA; the nascent peptide is terminated with the 'tag peptide' encoded by the tmRNA and targeted for degradation. The ribosome is freed to recommence translation, which seems to be the essential function of trans-translation. This Enterococcus faecalis (strain ATCC 700802 / V583) protein is SsrA-binding protein.